A 1883-amino-acid polypeptide reads, in one-letter code: AF4/FMR2 family member lilli (1883 aa).

Low complexity predominate over residues 1 to 45 (MAQQQQQQHLQQQQQQHHQQQQLQQLQQQQQLPQYNNNLYNLNYN). Disordered stretches follow at residues 1 to 88 (MAQQ…SEGD), 140 to 311 (INST…EKDI), 329 to 381 (SIAA…SCTT), 449 to 540 (MPTP…HHQH), 609 to 654 (LGGG…HLSR), 796 to 827 (SISSGSASGSSSSDSAAGEVVPLPGPGETLQI), 844 to 901 (MQQK…KKHA), 922 to 962 (TAAA…LAKG), 992 to 1018 (VAGSRKREHSSNSSSNGNTPTKKLHAA), 1039 to 1075 (TAAAGSSSDEDSTSSSCSSTKSSNSSSSGSDSEATAT), 1115 to 1145 (KNNRLYGAGSSSNSSSSETEEQQQQQQQHKQ), 1170 to 1238 (QHQQ…KSDK), 1358 to 1413 (YAAE…GART), 1450 to 1510 (EHGV…DQVS), 1543 to 1583 (ANGS…KATT), 1595 to 1641 (QTST…PPSD), and 1783 to 1803 (PSNSVGSQGSGSNTPPGRIVP). Residues 57-80 (REKYERQQGIQSDDRETSLFEAPR) show a composition bias toward basic and acidic residues. Low complexity-rich tracts occupy residues 140–154 (INSTTTTSSSASLLP), 161–178 (QQQQQQQQQQQQHYQQQQ), 223–253 (SASSSSSASNNNSSSATNNATAAAATSASTA), and 362–381 (PLNSPPAASGASSSSLSCTT). A compositionally biased stretch (pro residues) spans 450 to 462 (PTPPKASPTPPTA). The residue at position 458 (T458) is a Phosphothreonine. Over residues 466 to 479 (LKSEKNHSLEKQDS) the composition is skewed to basic and acidic residues. Over residues 481–491 (LENDLELSESD) the composition is skewed to acidic residues. Phosphoserine is present on residues S488 and S490. Low complexity predominate over residues 500–540 (SAGNSSNSSETDSSESGSEASSKGEAQQQQQQQQQLLHHQH). The span at 609–625 (LGGGGGSGSTGGGGGSS) shows a compositional bias: gly residues. 2 stretches are compositionally biased toward low complexity: residues 626–639 (SSGMGNMSSSSSSN) and 796–813 (SISSGSASGSSSSDSAAG). Over residues 867 to 877 (PRQKKPRKKKM) the composition is skewed to basic residues. 2 positions are modified to phosphoserine: S887 and S888. Residues 930–942 (KKGRGRPRKQQQQ) constitute a DNA-binding region (a.T hook). Residues 939 to 962 (QQQQLQQTQSGNLSSASAGSLAKG) are compositionally biased toward low complexity. Residues S953 and S955 each carry the phosphoserine modification. Composition is skewed to low complexity over residues 1124-1145 (SSSNSSSSETEEQQQQQQQHKQ), 1170-1186 (QHQQQQPLQPQQQQQQQ), 1200-1222 (SSSSDGSSSSSTDSSSTNSSSSS), 1362-1376 (QQQQQQQHLHTQQLH), and 1385-1399 (HYQQQHQPHQQKAQQ). Basic and acidic residues predominate over residues 1450-1467 (EHGVKPEPELDAGYEAKY). S1546 bears the Phosphoserine mark. A Phosphothreonine modification is found at T1548. Low complexity-rich tracts occupy residues 1558-1583 (QQQQHQQQQQQQQHQPQHQQQLKATT) and 1595-1606 (QTSTTATQQPTT). Over residues 1614–1625 (TPPPVAPPPPPR) the composition is skewed to pro residues. Residues 1783 to 1794 (PSNSVGSQGSGS) show a composition bias toward low complexity.

It belongs to the AF4 family.

It localises to the nucleus. Its function is as follows. Has a role in transcriptional regulation. Acts in parallel with the Ras/MAPK and the PI3K/PKB pathways in the control of cell identity and cellular growth. Essential for regulation of the cytoskeleton and cell growth but not for cell proliferation or growth rate. Required specifically for the microtubule-based basal transport of lipid droplets. Plays a partially redundant function downstream of Raf in cell fate specification in the developing eye. Pair-rule protein that regulates embryonic cellularization, gastrulation and segmentation. The chain is AF4/FMR2 family member lilli from Drosophila grimshawi (Hawaiian fruit fly).